Consider the following 230-residue polypeptide: Ion-translocating oxidoreductase complex subunit E (230 aa).

The next 6 helical transmembrane spans lie at 11–31 (GMWA…LLAV), 39–59 (LGLG…VSLV), 69–89 (IPVF…LMNA), 93–113 (GLYL…IIIG), 132–152 (FWMG…REII), and 182–202 (SFLL…LIAL).

It belongs to the NqrDE/RnfAE family. The complex is composed of six subunits: RnfA, RnfB, RnfC, RnfD, RnfE and RnfG.

It localises to the cell inner membrane. Functionally, part of a membrane-bound complex that couples electron transfer with translocation of ions across the membrane. The polypeptide is Ion-translocating oxidoreductase complex subunit E (Vibrio atlanticus (strain LGP32) (Vibrio splendidus (strain Mel32))).